A 485-amino-acid polypeptide reads, in one-letter code: Hydrogenase transcriptional regulatory protein HoxA (485 aa).

A Response regulatory domain is found at 6–120 (TILVVDDEVR…QLVETVKEAV (115 aa)). The residue at position 54 (D54) is a 4-aspartylphosphate. A Sigma-54 factor interaction domain is found at 166 to 392 (STESPMHAVI…ELQNEIQRMA (227 aa)). ATP-binding positions include 192 to 199 (GESGTGKE) and 264 to 273 (EIGETSPAFQ). The interval 404–426 (PLLGRRNGKRSAPLPAHGRLNGS) is disordered. The H-T-H motif DNA-binding region spans 451-470 (NISRVASELGLSRVGLRNKL).

It is found in the cytoplasm. Probable member of the two-component regulatory system involved in the regulation of the hydrogenase activity. HoxA is probably phosphorylated by a sensory component (which could be HoxX) and then acts in conjunction with sigma-54 as a transcriptional activator. The polypeptide is Hydrogenase transcriptional regulatory protein HoxA (hoxA) (Bradyrhizobium diazoefficiens (strain JCM 10833 / BCRC 13528 / IAM 13628 / NBRC 14792 / USDA 110)).